A 618-amino-acid polypeptide reads, in one-letter code: Proline--tRNA ligase (618 aa).

Belongs to the class-II aminoacyl-tRNA synthetase family. ProS type 1 subfamily. As to quaternary structure, homodimer.

Its subcellular location is the cytoplasm. It carries out the reaction tRNA(Pro) + L-proline + ATP = L-prolyl-tRNA(Pro) + AMP + diphosphate. In terms of biological role, catalyzes the attachment of proline to tRNA(Pro) in a two-step reaction: proline is first activated by ATP to form Pro-AMP and then transferred to the acceptor end of tRNA(Pro). As ProRS can inadvertently accommodate and process non-cognate amino acids such as alanine and cysteine, to avoid such errors it has two additional distinct editing activities against alanine. One activity is designated as 'pretransfer' editing and involves the tRNA(Pro)-independent hydrolysis of activated Ala-AMP. The other activity is designated 'posttransfer' editing and involves deacylation of mischarged Ala-tRNA(Pro). The misacylated Cys-tRNA(Pro) is not edited by ProRS. The protein is Proline--tRNA ligase of Streptococcus equi subsp. zooepidemicus (strain H70).